Consider the following 87-residue polypeptide: Beta-toxin Cn5 (87 aa).

The signal sequence occupies residues 1–19 (MNSLLMITACLFLIGTVWA). The LCN-type CS-alpha/beta domain maps to 20–85 (KEGYLVNKST…TYPLPNKSCS (66 aa)). Disulfide bonds link C31–C84, C35–C60, C44–C65, and C48–C67.

Belongs to the long (4 C-C) scorpion toxin superfamily. Sodium channel inhibitor family. Beta subfamily. As to expression, expressed by the venom gland.

The protein resides in the secreted. In terms of biological role, beta toxins bind voltage-independently at site-4 of sodium channels (Nav) and shift the voltage of activation toward more negative potentials thereby affecting sodium channel activation and promoting spontaneous and repetitive firing. This toxin is lethal to crustaceans (freshwater crayfish (Cambarellus montezumae spp.)), it provokes a reversible paralysis to insects (crickets (Achaeta spp.)), but is not toxic to mice. At high concentrations, it does displace the (beta) mammal-specific toxin Cn2 from rat brain synaptosomes. This Centruroides noxius (Mexican scorpion) protein is Beta-toxin Cn5.